The primary structure comprises 192 residues: MRIVFIGPPGAGKGTQCELLSKALKVPHIGTGGMLRALEPESGEQIHLRIDRGHFAPDDFVLQMVAERLSQPDSRTGYLLDGFPRTQVQASAFDKQLVAASLKLDHVLHLQVSADVLIERLRKRGETENRADDSEEFIRERFRIYEDRTAPLLDHYRCQGLVRDIDASDSESLVHASICECLNFTLASPAES.

10 to 15 (GAGKGT) contacts ATP. Residues 30–56 (GTGGMLRALEPESGEQIHLRIDRGHFA) are NMP. AMP-binding positions include Thr-31, Arg-36, 82 to 85 (GFPR), and Gln-89. The interval 123–133 (KRGETENRADD) is LID. Arg-124 contacts ATP. 2 residues coordinate AMP: Arg-130 and Arg-141. Asp-169 contacts ATP.

It belongs to the adenylate kinase family. In terms of assembly, monomer.

It is found in the cytoplasm. It carries out the reaction AMP + ATP = 2 ADP. It participates in purine metabolism; AMP biosynthesis via salvage pathway; AMP from ADP: step 1/1. In terms of biological role, catalyzes the reversible transfer of the terminal phosphate group between ATP and AMP. Plays an important role in cellular energy homeostasis and in adenine nucleotide metabolism. The chain is Adenylate kinase from Rhodopirellula baltica (strain DSM 10527 / NCIMB 13988 / SH1).